The following is a 363-amino-acid chain: 3-dehydroquinate synthase (363 aa).

Residues 109 to 113 (GATTD), 133 to 134 (TT), Lys146, and Lys155 each bind NAD(+). Residues Glu188, His251, and His267 each coordinate Zn(2+).

Belongs to the sugar phosphate cyclases superfamily. Dehydroquinate synthase family. NAD(+) is required as a cofactor. The cofactor is Co(2+). Requires Zn(2+) as cofactor.

It localises to the cytoplasm. It carries out the reaction 7-phospho-2-dehydro-3-deoxy-D-arabino-heptonate = 3-dehydroquinate + phosphate. It functions in the pathway metabolic intermediate biosynthesis; chorismate biosynthesis; chorismate from D-erythrose 4-phosphate and phosphoenolpyruvate: step 2/7. In terms of biological role, catalyzes the conversion of 3-deoxy-D-arabino-heptulosonate 7-phosphate (DAHP) to dehydroquinate (DHQ). The polypeptide is 3-dehydroquinate synthase (Streptomyces avermitilis (strain ATCC 31267 / DSM 46492 / JCM 5070 / NBRC 14893 / NCIMB 12804 / NRRL 8165 / MA-4680)).